Here is a 587-residue protein sequence, read N- to C-terminus: Xyloglucan-specific endo-beta-1,4-glucanase BoGH9A (587 aa).

The signal sequence occupies residues 1-19 (MKIVRYIALFGILSGLAVA). Residue Cys-20 is the site of N-palmitoyl cysteine attachment. Cys-20 carries S-diacylglycerol cysteine lipidation. Asp-185 serves as the catalytic Nucleophile. Residues His-511 and Asp-553 contribute to the active site. Glu-562 (proton donor) is an active-site residue.

It belongs to the glycosyl hydrolase 9 (cellulase E) family.

It is found in the cell outer membrane. It carries out the reaction xyloglucan + H2O = xyloglucan oligosaccharides.. It functions in the pathway glucan metabolism; xyloglucan degradation. Catalyzes endohydrolysis of 1,4-beta-D-glucosidic linkages in xyloglucan with retention of the beta-configuration of the glycosyl residues in xyloglucan degradation. Cleaves the backbone of the 3 major types of natural xyloglucans (seed galactoxyloglucan from tamarind kernel, dicot fucogalactoxyloglucan from lettuce leaves, and solanaceous arabinogalactoxyloglucan from tomato fruit), to produce xyloglucan oligosaccharides. May be superfluous in xyloglucan degradation compared to BoGH5A (AC A7LXT7), the other Xyloglucan-specific endo-beta-1,4-glucanase. The protein is Xyloglucan-specific endo-beta-1,4-glucanase BoGH9A of Bacteroides ovatus (strain ATCC 8483 / DSM 1896 / JCM 5824 / BCRC 10623 / CCUG 4943 / NCTC 11153).